An 855-amino-acid polypeptide reads, in one-letter code: Protein translocase subunit SecA (855 aa).

Residues Gln88, 106-110 (GEGKT), and Asp509 contribute to the ATP site. The tract at residues 815 to 837 (EANLQNKFEKKPARNEPCPCGSG) is disordered. Zn(2+)-binding residues include Cys832, Cys834, Cys843, and Cys844.

This sequence belongs to the SecA family. As to quaternary structure, monomer and homodimer. Part of the essential Sec protein translocation apparatus which comprises SecA, SecYEG and auxiliary proteins SecDF-YajC and YidC. Zn(2+) serves as cofactor.

Its subcellular location is the cell inner membrane. It is found in the cytoplasm. It catalyses the reaction ATP + H2O + cellular proteinSide 1 = ADP + phosphate + cellular proteinSide 2.. In terms of biological role, part of the Sec protein translocase complex. Interacts with the SecYEG preprotein conducting channel. Has a central role in coupling the hydrolysis of ATP to the transfer of proteins into and across the cell membrane, serving as an ATP-driven molecular motor driving the stepwise translocation of polypeptide chains across the membrane. This chain is Protein translocase subunit SecA, found in Campylobacter fetus subsp. fetus (strain 82-40).